The primary structure comprises 390 residues: Zinc transporter 8 (390 aa).

Residues 1–25 form the signal peptide; sequence MRTNTTATVLLAAAVALLLATAARG. The N-linked (GlcNAc...) asparagine glycan is linked to Asn4. The Extracellular portion of the chain corresponds to 26–50; sequence DGGDGGCGKEDAAAGRDRARARGLK. The chain crosses the membrane as a helical span at residues 51–71; the sequence is IAAFFSILVCGALGCGLPSLG. Residues 72–82 are Cytoplasmic-facing; the sequence is RHVPALRPDGD. Residues 83 to 103 traverse the membrane as a helical segment; sequence VFFLVKAFAAGVILATGFIHI. Residues 104-124 are Extracellular-facing; the sequence is LPDAFDNLTDDCLPAGGPWKE. The N-linked (GlcNAc...) asparagine glycan is linked to Asn110. A helical membrane pass occupies residues 125–145; it reads FPFAGFGAMVGAIGTLVVDTL. Over 146–235 the chain is Cytoplasmic; the sequence is ATGYFTRALS…DDKETTLRHR (90 aa). The segment at 165–199 is disordered; sequence VADEEKQSAAATQQHNHHHNHHVVGDGGGGGEEHE. The helical transmembrane segment at 236–256 threads the bilayer; the sequence is VISQVLELGIVVHSVIIGISL. Residues 257–267 are Extracellular-facing; it reads GASQNPETIKP. Residues 268-288 traverse the membrane as a helical segment; sequence LVVALSFHQMFEGMGLGGCIV. Residues 289 to 296 are Cytoplasmic-facing; sequence QAKFKVRS. The helical transmembrane segment at 297–317 threads the bilayer; sequence IVTMVLFFCLTTPVGIAVGVG. Over 318-329 the chain is Extracellular; the sequence is ISSVYNESSPTA. The N-linked (GlcNAc...) asparagine glycan is linked to Asn323. The chain crosses the membrane as a helical span at residues 330-350; sequence LVVEGILNSVAAGILIYMALV. The Cytoplasmic segment spans residues 351–369; it reads DLLAEDFMNPRVQSKGKLQ. The chain crosses the membrane as a helical span at residues 370 to 390; the sequence is LGINLAMLAGAGLMSMLAKWA.

It belongs to the ZIP transporter (TC 2.A.5) family.

Its subcellular location is the cell membrane. In terms of biological role, zinc transporter that may mediate zinc uptake from the rhizosphere and may be responsible for the translocation of zinc within the plant. The protein is Zinc transporter 8 (ZIP8) of Oryza sativa subsp. japonica (Rice).